Reading from the N-terminus, the 741-residue chain is MSKRGQPAWQAPEAVDRPKLKLFNSLTRQKEDFVPLDGNNVTWYSCGPTVYDASHMGHARSYISFDILRRILSDYFGYNIHYVMNITDIDDKIIRRARQNHLFDEYAAEAQKLPLDELLGQQKEVLQRFQDTCAKNTDPDKKIMLDKTLQRMNDAVEALTKAVGKGDEREISEKRLLYLNEAKDPISDWLDSLKGAQINDNAVFEALPRYWEDQFHNDMKSLNILPPDVLTRVSEYVPQIVTFIQKIIDNGLAYAANNSVYFDVNGFDKREKHHYAKLVPEAYGDTKSLQEGEGDLSIAEDRLSEKRSANDFALWKASKAGEPWWDSPWGKGRPGWHIECSAMASDIFGPTFDIHTGGVDLKFPHHDNELAQSEAAFNESEWVKYFLHTGHLTIAGCKMSKSLKNFVTIQEALKKHSATQLRLAFLLHSWKDTLDYSENTMEMATQYEKFLNEFFLNVKDLTRHVLSEEPRRQFDAWTEVEAALQKKFSNAQVQVHASLCDNIDTRSALDAIRELVSVSNVYIRDNKTRLNSLLLRNVATYITDLLHVFGAISGPRGGIGFPVSGGSGAQAAGADLETTVLPYVQSLAEFRYLVREQAKTLKAFDILKLCDDLRDNVLPNLGVRLEDKDIGKYAVKLVDRDSLLREREAKLAAEAEKAAEKERKKQAAAEAAAAKEAQRRVNPKEMFLAETEKYSAFDENGLPTHDKEGKEVSKGQIKKLQKLQQQQEQRYNEYLASIEKA.

Position 46 (Cys-46) interacts with Zn(2+). The 'HIGH' region motif lies at 48–58; that stretch reads PTVYDASHMGH. The residue at position 297 (Ser-297) is a Phosphoserine. Zn(2+)-binding residues include Cys-340, His-365, and Glu-369. The 'KMSKS' region signature appears at 398 to 402; the sequence is KMSKS. Lys-401 contacts ATP. Residues 697–718 are disordered; it reads FDENGLPTHDKEGKEVSKGQIK. Positions 704-713 are enriched in basic and acidic residues; the sequence is THDKEGKEVS.

This sequence belongs to the class-I aminoacyl-tRNA synthetase family. It depends on Zn(2+) as a cofactor.

It localises to the cytoplasm. The catalysed reaction is tRNA(Cys) + L-cysteine + ATP = L-cysteinyl-tRNA(Cys) + AMP + diphosphate. This is Cysteine--tRNA ligase, cytoplasmic from Drosophila melanogaster (Fruit fly).